A 72-amino-acid polypeptide reads, in one-letter code: Brevinin-2SN3 (72 aa).

The first 22 residues, 1–22 (MFTLKKPLLLLVFLGMISLSLC), serve as a signal peptide directing secretion. A propeptide spans 23-40 (QDERGADEDDGGEMTEEE) (removed in mature form). The cysteines at positions 66 and 72 are disulfide-linked.

It belongs to the frog skin active peptide (FSAP) family. Brevinin subfamily. As to expression, expressed by the skin glands.

The protein resides in the secreted. Its function is as follows. Antimicrobial peptide. Active against a variety of Gram-negative and Gram-positive bacterial strains. Active against fungus C.glabrata 090902 but not against C.albicans ATCC 10231. Shows hemolytic activity against human erythrocytes. This chain is Brevinin-2SN3, found in Sylvirana spinulosa (Fine-spined frog).